We begin with the raw amino-acid sequence, 1108 residues long: Activity-dependent neuroprotector homeobox protein (1108 aa).

The segment at 1–685 (MFQLPVNNLG…ASTITLHLVH (685 aa)) is binds to beta-catenin/CTNNB1. Glycyl lysine isopeptide (Lys-Gly) (interchain with G-Cter in SUMO2) cross-links involve residues Lys-39 and Lys-72. The C2H2-type 1; degenerate zinc-finger motif lies at 74–97 (FCCSACPFSSKFFSAYKSHFRNVH). Position 98 is a phosphoserine (Ser-98). The C2H2-type 2; degenerate zinc finger occupies 107–129 (LNCPYCTFNADKKTLETHIKIFH). The segment at 133-154 (SSAPSSSLSTFKDKNKNDGLKP) is disordered. A compositionally biased stretch (basic and acidic residues) spans 143 to 154 (FKDKNKNDGLKP). Residues Lys-144 and Lys-155 each participate in a glycyl lysine isopeptide (Lys-Gly) (interchain with G-Cter in SUMO2) cross-link. The C2H2-type 3; degenerate zinc-finger motif lies at 165 to 188 (YYCKKCTYRDPLYEIVRKHIYREH). Glycyl lysine isopeptide (Lys-Gly) (interchain with G-Cter in SUMO2) cross-links involve residues Lys-203, Lys-231, Lys-266, Lys-274, Lys-278, Lys-279, Lys-311, and Lys-335. The C2H2-type 4; degenerate zinc finger occupies 221 to 244 (IHCKRCLFMPKSYEALVQHVIEDH). Arg-348 is modified (asymmetric dimethylarginine). The tract at residues 354 to 361 (NAPVSIPQ) is neuroprotective peptide; contributes to CTNNB1-binding, but less effective than whole N-terminal region. A disordered region spans residues 360 to 438 (PQQSQSVKQL…PAATGPPPSN (79 aa)). Glycyl lysine isopeptide (Lys-Gly) (interchain with G-Cter in SUMO2) cross-links involve residues Lys-367 and Lys-407. Positions 393–422 (SLQTANTSLPPGQVKSPSVSQSQASRVLGQ) are enriched in polar residues. 2 positions are modified to phosphoserine: Ser-408 and Ser-412. Lys-426 participates in a covalent cross-link: Glycyl lysine isopeptide (Lys-Gly) (interchain with G-Cter in SUMO2). Residues 426-437 (KPPPAATGPPPS) show a composition bias toward pro residues. A C2H2-type 5; atypical zinc finger spans residues 446–468 (KICTICNELFPENVYSVHFEKEH). 2 C2H2-type zinc fingers span residues 488–509 (SKCL…MLIH) and 511–534 (LSCP…RMVH). Glycyl lysine isopeptide (Lys-Gly) (interchain with G-Cter in SUMO2) cross-links involve residues Lys-599 and Lys-605. Ser-607 carries the post-translational modification Phosphoserine. Glycyl lysine isopeptide (Lys-Gly) (interchain with G-Cter in SUMO2) cross-links involve residues Lys-615, Lys-620, Lys-631, and Lys-657. Residues 621–646 (TLCPLCFSILKGPISDALAHHLRERH) form a C2H2-type 8; atypical zinc finger. Residues 661-685 (YKCIHCLGVYTSNMTASTITLHLVH) form a C2H2-type 9; atypical zinc finger. A disordered region spans residues 690–711 (GKTQNGQDKTNAPSRLNQSPGL). Over residues 691–709 (KTQNGQDKTNAPSRLNQSP) the composition is skewed to polar residues. Residue Lys-698 forms a Glycyl lysine isopeptide (Lys-Gly) (interchain with G-Cter in SUMO2) linkage. A Phosphoserine modification is found at Ser-708. Residues Lys-715, Lys-727, and Lys-730 each participate in a glycyl lysine isopeptide (Lys-Gly) (interchain with G-Cter in SUMO2) cross-link. Ser-737 is modified (phosphoserine). A Glycyl lysine isopeptide (Lys-Gly) (interchain with G-Cter in SUMO2) cross-link involves residue Lys-744. The homeobox DNA-binding region spans 753 to 813 (LDPKGHEDDS…SNKRKKCVRD (61 aa)). A Phosphoserine modification is found at Ser-804. Residues Lys-806, Lys-828, and Lys-834 each participate in a glycyl lysine isopeptide (Lys-Gly) (interchain with G-Cter in SUMO2) cross-link. The span at 851 to 880 (KDSRVNASKTVDKKHNLGKEDDSFSDSFEH) shows a compositional bias: basic and acidic residues. Residues 851 to 1037 (KDSRVNASKT…DTEQLKWKNS (187 aa)) are disordered. Phosphoserine is present on residues Ser-875, Ser-877, Ser-885, Ser-888, and Ser-904. Residues Lys-913, Lys-928, and Lys-941 each participate in a glycyl lysine isopeptide (Lys-Gly) (interchain with G-Cter in SUMO2) cross-link. Residues 928–938 (KEEEEEEEEED) are compositionally biased toward acidic residues. A compositionally biased stretch (basic and acidic residues) spans 939 to 959 (GSKYETIHLTEEPAKLMHDAS). 2 positions are modified to phosphoserine: Ser-959 and Ser-961. The segment covering 977–988 (PSESGPGSQQIS) has biased composition (polar residues). Lys-1022 participates in a covalent cross-link: Glycyl lysine isopeptide (Lys-Gly) (interchain with G-Cter in SUMO2). N6-acetyllysine; alternate occurs at positions 1041 and 1048. Glycyl lysine isopeptide (Lys-Gly) (interchain with G-Cter in SUMO2); alternate cross-links involve residues Lys-1041 and Lys-1048. Positions 1050–1108 (QSQWENASENAERLPNPQIEWQNSTIDSEDGEQFDSMTDGVADPMHGSLTGVKLSSQQA) are disordered. Position 1077 is a phosphoserine (Ser-1077).

As to quaternary structure, interacts (via N-terminal region) with beta-catenin/CTNNB1 (via the central armadillo domains); interaction is direct and stabilizes CTNNB1 by modulating its phosphorylation by glycogen synthase kinase-3 beta GSK3B. In terms of tissue distribution, expressed in the brain, with a higher expression in cerebellum and hippocampus. Weakly expressed in lung, kidney and intestine, and expressed at intermediate level in testis.

It is found in the nucleus. Its subcellular location is the chromosome. In terms of biological role, may be involved in transcriptional regulation. May mediate some of the neuroprotective peptide VIP-associated effects involving normal growth and cancer proliferation. Positively modulates WNT-beta-catenin/CTNN1B signaling, acting by regulating phosphorylation of, and thereby stabilizing, CTNNB1. May be required for neural induction and neuronal differentiation. May be involved in erythroid differentiation. The polypeptide is Activity-dependent neuroprotector homeobox protein (Adnp) (Mus musculus (Mouse)).